Reading from the N-terminus, the 203-residue chain is Outer-membrane lipoprotein LolB (203 aa).

A signal peptide spans 1–21 (MTGRWSPRLLAGLLAALVLSG). Cys22 carries N-palmitoyl cysteine lipidation. Residue Cys22 is the site of S-diacylglycerol cysteine attachment.

This sequence belongs to the LolB family. As to quaternary structure, monomer.

It is found in the cell outer membrane. Its function is as follows. Plays a critical role in the incorporation of lipoproteins in the outer membrane after they are released by the LolA protein. This chain is Outer-membrane lipoprotein LolB, found in Halorhodospira halophila (strain DSM 244 / SL1) (Ectothiorhodospira halophila (strain DSM 244 / SL1)).